Consider the following 362-residue polypeptide: MSAAPLCLIAAGGTGGHMFPAQSLAETLLAQGWRVKLSTDERGARYAGAFPAEVAREVVSSATTARGGALARLAVPFRIGAGVLAAIRAMRADRPAVVVGFGGYPTIPAMSAALVLRIPRMIHEQNGIMGRVNMAFARRVDRVACGTWPTRLPPGVQGIHTGNPVRQAVLDRAGAPYVPPGEGGLNLLVIGGSQGARVLSDMVPEAIAGLPDEMRTRLSVSHQARAEDAERVIAAYASAGISAVVRPFFDDVPQRLADCQLVISRAGASSIADITVIGRPAILIPYAAATGDHQTANARALAESGAGVVLPESVLDAESLRRDMRDILSDSARATAMAAAALTLARPDAAQRLADLVTELTR.

UDP-N-acetyl-alpha-D-glucosamine contacts are provided by residues 14–16 (TGG), Asn-126, Arg-166, Ser-193, and Gln-294.

The protein belongs to the glycosyltransferase 28 family. MurG subfamily.

Its subcellular location is the cell inner membrane. The enzyme catalyses di-trans,octa-cis-undecaprenyl diphospho-N-acetyl-alpha-D-muramoyl-L-alanyl-D-glutamyl-meso-2,6-diaminopimeloyl-D-alanyl-D-alanine + UDP-N-acetyl-alpha-D-glucosamine = di-trans,octa-cis-undecaprenyl diphospho-[N-acetyl-alpha-D-glucosaminyl-(1-&gt;4)]-N-acetyl-alpha-D-muramoyl-L-alanyl-D-glutamyl-meso-2,6-diaminopimeloyl-D-alanyl-D-alanine + UDP + H(+). It functions in the pathway cell wall biogenesis; peptidoglycan biosynthesis. Its function is as follows. Cell wall formation. Catalyzes the transfer of a GlcNAc subunit on undecaprenyl-pyrophosphoryl-MurNAc-pentapeptide (lipid intermediate I) to form undecaprenyl-pyrophosphoryl-MurNAc-(pentapeptide)GlcNAc (lipid intermediate II). The sequence is that of UDP-N-acetylglucosamine--N-acetylmuramyl-(pentapeptide) pyrophosphoryl-undecaprenol N-acetylglucosamine transferase from Paracoccus denitrificans (strain Pd 1222).